Reading from the N-terminus, the 239-residue chain is Peroxygenase (239 aa).

At G2 the chain carries N-acetylglycine. Residues 60–95 form the EF-hand domain; it reads HNMSVLQQRAAFFDRNNDGIVYPWETYQGFRAVGFG. Positions 73, 75, 77, and 84 each coordinate Ca(2+). The short motif at 116-125 is the Proline-knot element; that stretch reads PSWIPSPVLS.

This sequence belongs to the caleosin family. As to quaternary structure, homodimer. Requires heme b as cofactor. Ca(2+) serves as cofactor. Expressed in pollen (at protein level). Not expressed in leaf, root, stem, tepal, ovary, style, filament or stigma (at protein level).

It is found in the lipid droplet. The protein localises to the microsome membrane. The catalysed reaction is RH + ROOH = ROH + ROH.. Calcium-binding peroxygenase involved in the degradation of storage lipid in oil bodies. The polypeptide is Peroxygenase (Lilium longiflorum (Trumpet lily)).